The chain runs to 505 residues: Probable cytosol aminopeptidase (505 aa).

Mn(2+) contacts are provided by Lys269 and Asp274. Residue Lys281 is part of the active site. Residues Asp292, Asp351, and Glu353 each contribute to the Mn(2+) site. Residue Arg355 is part of the active site.

This sequence belongs to the peptidase M17 family. It depends on Mn(2+) as a cofactor.

It is found in the cytoplasm. It carries out the reaction Release of an N-terminal amino acid, Xaa-|-Yaa-, in which Xaa is preferably Leu, but may be other amino acids including Pro although not Arg or Lys, and Yaa may be Pro. Amino acid amides and methyl esters are also readily hydrolyzed, but rates on arylamides are exceedingly low.. It catalyses the reaction Release of an N-terminal amino acid, preferentially leucine, but not glutamic or aspartic acids.. Its function is as follows. Presumably involved in the processing and regular turnover of intracellular proteins. Catalyzes the removal of unsubstituted N-terminal amino acids from various peptides. The sequence is that of Probable cytosol aminopeptidase from Rhodococcus opacus (strain B4).